The following is a 167-amino-acid chain: Protein-export protein SecB (167 aa).

The protein belongs to the SecB family. As to quaternary structure, homotetramer, a dimer of dimers. One homotetramer interacts with 1 SecA dimer.

Its subcellular location is the cytoplasm. Its function is as follows. One of the proteins required for the normal export of preproteins out of the cell cytoplasm. It is a molecular chaperone that binds to a subset of precursor proteins, maintaining them in a translocation-competent state. It also specifically binds to its receptor SecA. This Idiomarina loihiensis (strain ATCC BAA-735 / DSM 15497 / L2-TR) protein is Protein-export protein SecB.